We begin with the raw amino-acid sequence, 90 residues long: Putative septation protein SpoVG (90 aa).

Belongs to the SpoVG family.

In terms of biological role, could be involved in septation. The sequence is that of Putative septation protein SpoVG from Clostridium perfringens (strain SM101 / Type A).